The sequence spans 595 residues: Coronatine-insensitive protein homolog 1a (595 aa).

The 43-residue stretch at 20–62 folds into the F-box domain; sequence WVPDEALHLVMGHVEDPRDREAASRVCRRWHRIDALTRKHVTV. Jasmonate contacts are provided by Arg-90, Arg-351, Tyr-389, Arg-412, and Arg-499.

In terms of assembly, interacts with TIFY6A/JAZ3, TIFY6B/JAZ4 and TIFY11D/JAZ12 in a coronatine-dependent manner. Interacts with TIFY9/JAZ5, TIFY10A/JAZ6, TIFY10B/JAZ7, TIFY11A/JAZ9 and TIFY11C/JAZ11 in a coronatine-dependent manner.

Its function is as follows. Involved in jasmonate (JA) signaling. Required for jasmonate signaling in plant defense responses. Can complement Arabidopsis coi1-1 mutant and restore jasmonate signaling. Required for JA-regulated defense responses to infestation by the leaffolder Cnaphalocrocis medinalis. May act on an initial response of jasmonate-regulated gene expression toward drought tolerance as part of a BHLH148-TIFY11D/JAZ12-COI1A complex. Component of SCF(COI1) E3 ubiquitin ligase complexes, which may mediate the ubiquitination and subsequent proteasomal degradation of target proteins, including TIFY/JAZ family. This Oryza sativa subsp. indica (Rice) protein is Coronatine-insensitive protein homolog 1a.